Consider the following 429-residue polypeptide: N5-carboxyaminoimidazole ribonucleotide synthase (429 aa).

ATP is bound by residues lysine 117, lysine 157, 194-197 (EERV), glutamate 202, and 280-281 (NE). The region spanning 121 to 310 (RQRLAAAGVA…QFEQHLRAVL (190 aa)) is the ATP-grasp domain. Residues 406–429 (RASDDAVGVPPACGGRSDEEERRL) are disordered.

Belongs to the PurK/PurT family. Homodimer.

It carries out the reaction 5-amino-1-(5-phospho-beta-D-ribosyl)imidazole + hydrogencarbonate + ATP = 5-carboxyamino-1-(5-phospho-D-ribosyl)imidazole + ADP + phosphate + 2 H(+). The protein operates within purine metabolism; IMP biosynthesis via de novo pathway; 5-amino-1-(5-phospho-D-ribosyl)imidazole-4-carboxylate from 5-amino-1-(5-phospho-D-ribosyl)imidazole (N5-CAIR route): step 1/2. Its function is as follows. Catalyzes the ATP-dependent conversion of 5-aminoimidazole ribonucleotide (AIR) and HCO(3)(-) to N5-carboxyaminoimidazole ribonucleotide (N5-CAIR). The sequence is that of N5-carboxyaminoimidazole ribonucleotide synthase from Mycobacterium bovis (strain ATCC BAA-935 / AF2122/97).